Here is a 477-residue protein sequence, read N- to C-terminus: Probable cytosolic Fe-S cluster assembly factor GL21135 (477 aa).

Residues Cys-23, Cys-69, Cys-72, Cys-75, Cys-188, Cys-244, Cys-396, and Cys-400 each contribute to the [4Fe-4S] cluster site.

The protein belongs to the NARF family.

In terms of biological role, component of the cytosolic iron-sulfur (Fe/S) protein assembly machinery. Required for maturation of extramitochondrial Fe/S proteins. This chain is Probable cytosolic Fe-S cluster assembly factor GL21135, found in Drosophila persimilis (Fruit fly).